Here is a 256-residue protein sequence, read N- to C-terminus: uncharacterized protein (256 aa).

A run of 3 helical transmembrane segments spans residues 42-62 (LIAL…IWFF), 73-93 (FFTL…LIFL), and 108-128 (WLFL…WLIV).

Its subcellular location is the cell membrane. This is an uncharacterized protein from Mycoplasma genitalium (strain ATCC 33530 / DSM 19775 / NCTC 10195 / G37) (Mycoplasmoides genitalium).